Consider the following 342-residue polypeptide: N-acetyl-gamma-glutamyl-phosphate reductase (342 aa).

Residue cysteine 146 is part of the active site.

This sequence belongs to the NAGSA dehydrogenase family. Type 1 subfamily.

It is found in the cytoplasm. It carries out the reaction N-acetyl-L-glutamate 5-semialdehyde + phosphate + NADP(+) = N-acetyl-L-glutamyl 5-phosphate + NADPH + H(+). The protein operates within amino-acid biosynthesis; L-arginine biosynthesis; N(2)-acetyl-L-ornithine from L-glutamate: step 3/4. Its function is as follows. Catalyzes the NADPH-dependent reduction of N-acetyl-5-glutamyl phosphate to yield N-acetyl-L-glutamate 5-semialdehyde. This is N-acetyl-gamma-glutamyl-phosphate reductase from Saccharopolyspora erythraea (strain ATCC 11635 / DSM 40517 / JCM 4748 / NBRC 13426 / NCIMB 8594 / NRRL 2338).